A 301-amino-acid chain; its full sequence is Protoheme IX farnesyltransferase (301 aa).

9 consecutive transmembrane segments (helical) span residues 20–42 (FTELVKIGIVNSNTITAFTGMWL), 55–75 (VDVIFFTIVGSALIVAASGAF), 105–125 (ALMVALVLGVVGTIMLFMTTW), 126–146 (QAGVLGVIGVFLYVVVYSLYA), 150–172 (LVSNTVIGSFSGAVPPLIGWFAV), 176–198 (FSIVPIMLFLVMFCWQPPHFYAI), 227–247 (MFFWVILLTILPFFMFDLGIV), 249–269 (VILATLLNIGWLALSIYGFKM), and 280–300 (FVYSLNYMTILFVAMVVISIF).

This sequence belongs to the UbiA prenyltransferase family. Protoheme IX farnesyltransferase subfamily. Interacts with CtaA.

Its subcellular location is the cell membrane. It carries out the reaction heme b + (2E,6E)-farnesyl diphosphate + H2O = Fe(II)-heme o + diphosphate. It functions in the pathway porphyrin-containing compound metabolism; heme O biosynthesis; heme O from protoheme: step 1/1. In terms of biological role, converts heme B (protoheme IX) to heme O by substitution of the vinyl group on carbon 2 of heme B porphyrin ring with a hydroxyethyl farnesyl side group. In Listeria monocytogenes serovar 1/2a (strain ATCC BAA-679 / EGD-e), this protein is Protoheme IX farnesyltransferase.